The sequence spans 354 residues: MKYPLDCEENFEKSFLFWLAKYVKFKLNSLSNKELKNPQALAEVNFALTKGVKNIDELDALAKKARNAGLSGVNTYFNPLKKVFEYLNFYKLYSLKQIDEELIVEVLASITGALSDASKKNYRIAVINFFDFLDKQNEEDEKAHIFDINLKNWAGIAGSKGVKLPEFMSKEELKKFLDAIENADFKNNTIRNKLIIKIIIFTGIRVSEAINIKMGDISEENDLYIIRIRAKGNKYRVVMIKKELIYDLLKNVSINYISKDALLFVNKKGTPLTQSYVSRIVEQLLFRAGIRKQKNGAHMLRHTFATLLYKKQKDLVLVQEALGHASLNTSRIYTHFDNDKLKLAAQVAKELSDS.

One can recognise a Core-binding (CB) domain in the interval 48–134 (LTKGVKNIDE…AVINFFDFLD (87 aa)). The 184-residue stretch at 163-346 (KLPEFMSKEE…DNDKLKLAAQ (184 aa)) folds into the Tyr recombinase domain. Catalysis depends on residues Arg205, Lys231, His298, Arg301, and His324. Catalysis depends on Tyr333, which acts as the O-(3'-phospho-DNA)-tyrosine intermediate.

It belongs to the 'phage' integrase family. XerH subfamily.

Its subcellular location is the cytoplasm. Its activity is regulated as follows. FtsK is required for efficient recombination. Its function is as follows. Site-specific tyrosine recombinase, which acts by catalyzing the cutting and rejoining of the recombining DNA molecules. Binds to the complete atypical dif motif (difH) site and to both halves separately. The chain is Tyrosine recombinase XerH from Campylobacter jejuni subsp. jejuni serotype O:2 (strain ATCC 700819 / NCTC 11168).